The following is a 235-amino-acid chain: Small ribosomal subunit protein uS2 (235 aa).

It belongs to the universal ribosomal protein uS2 family.

The chain is Small ribosomal subunit protein uS2 from Anoxybacillus flavithermus (strain DSM 21510 / WK1).